A 363-amino-acid chain; its full sequence is Large ribosomal subunit protein uL4A (363 aa).

Ser-87 is subject to Phosphoserine. The C-terminal-extended nuclear localization signal stretch occupies residues Pro-280–Asn-363.

This sequence belongs to the universal ribosomal protein uL4 family. Component of the large ribosomal subunit (LSU). Mature yeast ribosomes consist of a small (40S) and a large (60S) subunit. The 40S small subunit contains 1 molecule of ribosomal RNA (18S rRNA) and at least 33 different proteins. The large 60S subunit contains 3 rRNA molecules (25S, 5.8S and 5S rRNA) and at least 46 different proteins. uL4 is associated with the polypeptide exit tunnel. uL4 interacts with its chaperone ACL4 and the nuclear import receptor KAP104.

The protein resides in the cytoplasm. It localises to the nucleus. Functionally, component of the ribosome, a large ribonucleoprotein complex responsible for the synthesis of proteins in the cell. The small ribosomal subunit (SSU) binds messenger RNAs (mRNAs) and translates the encoded message by selecting cognate aminoacyl-transfer RNA (tRNA) molecules. The large subunit (LSU) contains the ribosomal catalytic site termed the peptidyl transferase center (PTC), which catalyzes the formation of peptide bonds, thereby polymerizing the amino acids delivered by tRNAs into a polypeptide chain. The nascent polypeptides leave the ribosome through a tunnel in the LSU and interact with protein factors that function in enzymatic processing, targeting, and the membrane insertion of nascent chains at the exit of the ribosomal tunnel. uL4 participates in the regulation of the accumulation of its own mRNA. This is Large ribosomal subunit protein uL4A (rpl402) from Schizosaccharomyces pombe (strain 972 / ATCC 24843) (Fission yeast).